We begin with the raw amino-acid sequence, 156 residues long: 3-hydroxyacyl-[acyl-carrier-protein] dehydratase FabZ (156 aa).

The active site involves histidine 57.

The protein belongs to the thioester dehydratase family. FabZ subfamily.

The protein localises to the cytoplasm. The enzyme catalyses a (3R)-hydroxyacyl-[ACP] = a (2E)-enoyl-[ACP] + H2O. Its function is as follows. Involved in unsaturated fatty acids biosynthesis. Catalyzes the dehydration of short chain beta-hydroxyacyl-ACPs and long chain saturated and unsaturated beta-hydroxyacyl-ACPs. The chain is 3-hydroxyacyl-[acyl-carrier-protein] dehydratase FabZ from Anaeromyxobacter dehalogenans (strain 2CP-C).